The sequence spans 139 residues: Ubiquitin-conjugating enzyme spm2 (139 aa).

The region spanning 5–139 (PRNFKLLEEL…PQPPEGSTFF (135 aa)) is the UBC core domain.

This sequence belongs to the ubiquitin-conjugating enzyme family. Heterodimer with ubc13.

Functionally, has a role in the DNA error-free postreplication repair (PRR) pathway. Lacks catalytic activity by itself. The ubc13/spm2 heterodimer catalyzes the synthesis of non-canonical poly-ubiquitin chains that are linked through 'Lys-63'. This Schizosaccharomyces pombe (strain 972 / ATCC 24843) (Fission yeast) protein is Ubiquitin-conjugating enzyme spm2 (spm2).